A 187-amino-acid polypeptide reads, in one-letter code: MLDSANYTPRLKAVYRDTIRAALKEEFGYKNDMQIPRLDKIVLNIGCGAEAVRDSKKAKSAQADLTLIAGQKAMTTTAKKSIAGFRVREEMPLGAKVTLRGDRMYEFLDRLITIAMPRIRDFRGISGKSFDGRGNYAMGLKEHLVFPEIDFDKIDENWGMDIVIATTAQTDAEAKSLLKAFNMPFNS.

The protein belongs to the universal ribosomal protein uL5 family. As to quaternary structure, part of the 50S ribosomal subunit; part of the 5S rRNA/L5/L18/L25 subcomplex. Contacts the 5S rRNA and the P site tRNA. Forms a bridge to the 30S subunit in the 70S ribosome.

This is one of the proteins that bind and probably mediate the attachment of the 5S RNA into the large ribosomal subunit, where it forms part of the central protuberance. In the 70S ribosome it contacts protein S13 of the 30S subunit (bridge B1b), connecting the 2 subunits; this bridge is implicated in subunit movement. Contacts the P site tRNA; the 5S rRNA and some of its associated proteins might help stabilize positioning of ribosome-bound tRNAs. The polypeptide is Large ribosomal subunit protein uL5 (Roseobacter denitrificans (strain ATCC 33942 / OCh 114) (Erythrobacter sp. (strain OCh 114))).